Reading from the N-terminus, the 327-residue chain is MTSAEKQLQPLFPHRHLLGIEGLSPTDITSLLDLADTYVEQNRQVDKKGSVLRGRTQINLFFEASTRTQSSFELAGKRLGADVMNMSVSSSSVKKGETLIDTAVTLNAMHPDLIIIRHQNSGAVELLAQKVSCSVINAGDGAHEHPTQALLDALTIRRRKGRLQGLIVAICGDILHSRVARSNILLLNAMGARVRVVAPPTLLPAGIERLGVEVFHDMAKGLEGVDIVMMLRLQLERMAGSYVPSQREYFHFYGLDYAKLAHAKPDALVMHPGPMNRGVEIDSAVADDIDRSLIREQVEMGVAVRMAVLDALSRNLPNELPLAGGRS.

Carbamoyl phosphate-binding residues include Arg-67 and Thr-68. An L-aspartate-binding site is contributed by Lys-95. Arg-117, His-145, and Gln-148 together coordinate carbamoyl phosphate. 2 residues coordinate L-aspartate: Arg-178 and Arg-232. Residues Gly-273 and Pro-274 each contribute to the carbamoyl phosphate site.

This sequence belongs to the aspartate/ornithine carbamoyltransferase superfamily. ATCase family. As to quaternary structure, heterododecamer (2C3:3R2) of six catalytic PyrB chains organized as two trimers (C3), and six regulatory PyrI chains organized as three dimers (R2).

The catalysed reaction is carbamoyl phosphate + L-aspartate = N-carbamoyl-L-aspartate + phosphate + H(+). It participates in pyrimidine metabolism; UMP biosynthesis via de novo pathway; (S)-dihydroorotate from bicarbonate: step 2/3. Catalyzes the condensation of carbamoyl phosphate and aspartate to form carbamoyl aspartate and inorganic phosphate, the committed step in the de novo pyrimidine nucleotide biosynthesis pathway. The sequence is that of Aspartate carbamoyltransferase catalytic subunit from Parvibaculum lavamentivorans (strain DS-1 / DSM 13023 / NCIMB 13966).